The primary structure comprises 396 residues: Putative N(4)-(beta-N-acetylglucosaminyl)-L-asparaginase GE19290 (396 aa).

The signal sequence occupies residues 1 to 23 (MKRHLKACLWVLCFASTALSSLA). Disulfide bonds link cysteine 100–cysteine 105 and cysteine 199–cysteine 215. Threonine 246 (nucleophile) is an active-site residue. Residues 274–277 (RVGD) and 297–300 (TGDG) each bind substrate. The cysteines at positions 357 and 384 are disulfide-linked.

Belongs to the Ntn-hydrolase family. In terms of assembly, heterotetramer of two alpha and two beta chains arranged as a dimer of alpha/beta heterodimers. Cleaved into an alpha and beta chain by autocatalysis; this activates the enzyme. The N-terminal residue of the beta subunit is responsible for the nucleophile hydrolase activity.

It carries out the reaction N(4)-(beta-N-acetyl-D-glucosaminyl)-L-asparagine + H2O = N-acetyl-beta-D-glucosaminylamine + L-aspartate + H(+). Functionally, cleaves the GlcNAc-Asn bond which joins oligosaccharides to the peptide of asparagine-linked glycoproteins. This Drosophila yakuba (Fruit fly) protein is Putative N(4)-(beta-N-acetylglucosaminyl)-L-asparaginase GE19290.